Consider the following 243-residue polypeptide: Pleckstrin homology domain-containing family B member 1 (243 aa).

Residues alanine 21–serine 128 form the PH domain.

As to quaternary structure, homodimer. Interacts (via PH domain) with MYO1C. Interacts (via PH domain) with MYO7A. Binds transducins. In terms of tissue distribution, highly expressed in retina and brain. Levels are very low or not detectable in all other tissues tested.

It localises to the membrane. The protein localises to the cytoplasm. The protein is Pleckstrin homology domain-containing family B member 1 (PLEKHB1) of Homo sapiens (Human).